Reading from the N-terminus, the 748-residue chain is Subtilisin-like protease (748 aa).

An N-terminal signal peptide occupies residues methionine 1 to alanine 24. Residues threonine 37–histidine 115 enclose the Inhibitor I9 domain. The Peptidase S8 domain occupies phenylalanine 122–asparagine 600. Active-site charge relay system residues include aspartate 147 and histidine 206. Positions proline 365–threonine 454 constitute a PA domain. Asparagine 376, asparagine 380, and asparagine 405 each carry an N-linked (GlcNAc...) asparagine glycan. Serine 533 (charge relay system) is an active-site residue. N-linked (GlcNAc...) asparagine glycans are attached at residues asparagine 675 and asparagine 722.

The protein belongs to the peptidase S8 family.

It localises to the secreted. The protein resides in the extracellular space. It is found in the apoplast. Functionally, required for arbuscular mycorrhiza (AM) development during AM symbiosis with AM fungi (e.g. Glomeromycota intraradices). This chain is Subtilisin-like protease, found in Medicago truncatula (Barrel medic).